The sequence spans 156 residues: Transcription factor MafK (156 aa).

A disordered region spans residues 1-21; it reads MTTNPKPNKALKVKEESGENA. Positions 51–76 are basic motif; sequence RLKQRRRTLKNRGYAASCRIKRVTQK. Positions 51–114 constitute a bZIP domain; sequence RLKQRRRTLK…DALRSKYEAL (64 aa). The segment at 79-93 is leucine-zipper; that stretch reads LERQRVELQQEVEKL.

The protein belongs to the bZIP family. Maf subfamily. As to quaternary structure, homodimer or heterodimer.

Its subcellular location is the nucleus. In terms of biological role, since they lack a putative transactivation domain, the small Mafs behave as transcriptional repressors when they dimerize among themselves. However, they act as transcriptional activators by dimerizing with other (usually larger) basic-zipper proteins and recruiting them to specific DNA-binding sites. Small Maf proteins heterodimerize with Fos and may act as competitive repressors of the NF-E2 transcription factor. In Gallus gallus (Chicken), this protein is Transcription factor MafK (MAFK).